Consider the following 271-residue polypeptide: Short-chain dehydrogenase/reductase SAT3 (271 aa).

NADP(+) contacts are provided by serine 17, aspartate 40, and asparagine 67. Serine 153 serves as the catalytic Proton donor. Residues tyrosine 168, lysine 172, and serine 203 each contribute to the NADP(+) site. Catalysis depends on tyrosine 168, which acts as the Proton acceptor. Lysine 172 serves as the catalytic Lowers pKa of active site Tyr.

This sequence belongs to the short-chain dehydrogenases/reductases (SDR) family.

It functions in the pathway mycotoxin biosynthesis. Its function is as follows. Short-chain dehydrogenase/reductase; part of the satratoxin SC1 cluster involved in the biosynthesis of satratoxins, trichothecene mycotoxins that are associated with human food poisonings. Satratoxins are suggested to be made by products of multiple gene clusters (SC1, SC2 and SC3) that encode 21 proteins in all, including polyketide synthases, acetyltransferases, and other enzymes expected to modify the trichothecene skeleton. SC1 encodes 10 proteins, SAT1 to SAT10. The largest are SAT8, which encodes a putative polyketide synthase (PKS) with a conventional non-reducing architecture, and SAT10, a putative protein containing four ankyrin repeats and thus may be involved in protein scaffolding. The putative short-chain reductase SAT3 may assist the PKS in some capacity. SAT6 contains a secretory lipase domain and acts probably as a trichothecene esterase. SAT5 encodes a putative acetyltransferase, and so, with SAT6, may affect endogenous protection from toxicity. The probable transcription factor SAT9 may regulate the expression of the SC1 cluster. SC2 encodes proteins SAT11 to SAT16, the largest of which encodes the putative reducing PKS SAT13. SAT11 is a cytochrome P450 monooxygenase, while SAT14 and SAT16 are probable acetyltransferases. The SC2 cluster may be regulated by the transcription factor SAT15. SC3 is a small cluster that encodes 5 proteins, SAT17 to SAT21. SAT21 is a putative MFS-type transporter which may have a role in exporting secondary metabolites. The four other proteins putatively encoded in SC3 include the taurine hydroxylase-like protein SAT17, the O-methyltransferase SAT18, the acetyltransferase SAT19, and the Cys6-type zinc finger SAT20, the latter being probably involved in regulation of SC3 expression. In Stachybotrys chartarum (strain CBS 109288 / IBT 7711) (Toxic black mold), this protein is Short-chain dehydrogenase/reductase SAT3.